The primary structure comprises 345 residues: Golgi-associated RAB2 interactor protein 1B (345 aa).

Disordered stretches follow at residues 222-241 (CSPS…SQPS) and 271-299 (SRSS…PCTR). Positions 275–285 (KKTENKKDSSG) are enriched in basic and acidic residues.

This sequence belongs to the GARIN family.

The protein resides in the golgi apparatus. Functionally, RAB2B effector protein required for accurate acrosome formation and normal male fertility. In complex with RAB2A/RAB2B, seems to suppress excessive vesicle trafficking during acrosome formation. The protein is Golgi-associated RAB2 interactor protein 1B (GARIN1B) of Bos taurus (Bovine).